Reading from the N-terminus, the 347-residue chain is Endophilin-A3 (347 aa).

Residues methionine 1 to isoleucine 21 form a membrane-binding amphipathic helix region. Residues serine 18–glutamine 249 enclose the BAR domain. A required for dimerization upon membrane association region spans residues proline 60 to proline 87. The stretch at glutamate 180–methionine 201 forms a coiled coil. Positions phenylalanine 218–aspartate 254 are interaction with ARC. Residues tyrosine 255–proline 284 are disordered. The span at valine 260–proline 284 shows a compositional bias: polar residues. The region spanning serine 285 to proline 344 is the SH3 domain.

Belongs to the endophilin family. Interacts with SGIP1 and DYDC1. Interacts with FASLG. Interacts with ATXN2. Interacts with BIN2. Interacts with ARC, DNM1 and SYNJ1. In terms of tissue distribution, expressed at high level in testis and at lower level in brain and liver.

It localises to the cytoplasm. The protein resides in the early endosome membrane. In terms of biological role, implicated in endocytosis. May recruit other proteins to membranes with high curvature. The polypeptide is Endophilin-A3 (Sh3gl3) (Rattus norvegicus (Rat)).